The sequence spans 277 residues: Adenylate kinase (277 aa).

Residue Gly53–Thr58 coordinates ATP. The interval Ala73–Val102 is NMP. AMP is bound by residues Thr74, Arg79, Gly100–Val102, Gly129–Arg132, and Gln136. The LID stretch occupies residues Gly170–Asp207. Residues Arg171 and Ser180 to Tyr181 contribute to the ATP site. AMP-binding residues include Arg204 and Arg215. Gln243 contacts ATP.

The protein belongs to the adenylate kinase family. AK2 subfamily. Monomer.

It is found in the cytoplasm. The protein localises to the cytosol. The protein resides in the mitochondrion intermembrane space. It carries out the reaction AMP + ATP = 2 ADP. In terms of biological role, catalyzes the reversible transfer of the terminal phosphate group between ATP and AMP. Plays an important role in cellular energy homeostasis and in adenine nucleotide metabolism. Adenylate kinase activity is critical for regulation of the phosphate utilization and the AMP de novo biosynthesis pathways. This is Adenylate kinase from Phaeosphaeria nodorum (strain SN15 / ATCC MYA-4574 / FGSC 10173) (Glume blotch fungus).